Reading from the N-terminus, the 314-residue chain is Acetyl-coenzyme A carboxylase carboxyl transferase subunit beta (314 aa).

In terms of domain architecture, CoA carboxyltransferase N-terminal spans 37–307 (LWQKCPACDT…MSLPSIDSEA (271 aa)). Zn(2+) is bound by residues Cys41, Cys44, Cys60, and Cys63. A C4-type zinc finger spans residues 41–63 (CPACDTLTYTKDLQQNWQVCPSC).

This sequence belongs to the AccD/PCCB family. Acetyl-CoA carboxylase is a heterohexamer composed of biotin carboxyl carrier protein (AccB), biotin carboxylase (AccC) and two subunits each of ACCase subunit alpha (AccA) and ACCase subunit beta (AccD). It depends on Zn(2+) as a cofactor.

It is found in the cytoplasm. The catalysed reaction is N(6)-carboxybiotinyl-L-lysyl-[protein] + acetyl-CoA = N(6)-biotinyl-L-lysyl-[protein] + malonyl-CoA. The protein operates within lipid metabolism; malonyl-CoA biosynthesis; malonyl-CoA from acetyl-CoA: step 1/1. In terms of biological role, component of the acetyl coenzyme A carboxylase (ACC) complex. Biotin carboxylase (BC) catalyzes the carboxylation of biotin on its carrier protein (BCCP) and then the CO(2) group is transferred by the transcarboxylase to acetyl-CoA to form malonyl-CoA. The polypeptide is Acetyl-coenzyme A carboxylase carboxyl transferase subunit beta (Synechococcus sp. (strain JA-2-3B'a(2-13)) (Cyanobacteria bacterium Yellowstone B-Prime)).